Here is a 361-residue protein sequence, read N- to C-terminus: Peptide chain release factor 1 (361 aa).

Gln235 is modified (N5-methylglutamine).

The protein belongs to the prokaryotic/mitochondrial release factor family. Methylated by PrmC. Methylation increases the termination efficiency of RF1.

It is found in the cytoplasm. Peptide chain release factor 1 directs the termination of translation in response to the peptide chain termination codons UAG and UAA. The sequence is that of Peptide chain release factor 1 from Xanthomonas campestris pv. campestris (strain B100).